Consider the following 117-residue polypeptide: Immunoglobulin lambda variable 7-43 (117 aa).

The signal sequence occupies residues Met-1–Ser-19. Residues Gln-20–Ser-44 form a framework-1 region. The Ig-like domain occupies Gln-20–Gln-117. Cys-41 and Cys-109 are oxidised to a cystine. Residues Thr-45–Tyr-53 form a complementarity-determining-1 region. The interval Pro-54–Tyr-70 is framework-2. Residues Ser-71 to Ser-73 form a complementarity-determining-2 region. Positions Asn-74–Cys-109 are framework-3. The interval Leu-110 to Gln-117 is complementarity-determining-3.

As to quaternary structure, immunoglobulins are composed of two identical heavy chains and two identical light chains; disulfide-linked.

It localises to the secreted. It is found in the cell membrane. V region of the variable domain of immunoglobulin light chains that participates in the antigen recognition. Immunoglobulins, also known as antibodies, are membrane-bound or secreted glycoproteins produced by B lymphocytes. In the recognition phase of humoral immunity, the membrane-bound immunoglobulins serve as receptors which, upon binding of a specific antigen, trigger the clonal expansion and differentiation of B lymphocytes into immunoglobulins-secreting plasma cells. Secreted immunoglobulins mediate the effector phase of humoral immunity, which results in the elimination of bound antigens. The antigen binding site is formed by the variable domain of one heavy chain, together with that of its associated light chain. Thus, each immunoglobulin has two antigen binding sites with remarkable affinity for a particular antigen. The variable domains are assembled by a process called V-(D)-J rearrangement and can then be subjected to somatic hypermutations which, after exposure to antigen and selection, allow affinity maturation for a particular antigen. The protein is Immunoglobulin lambda variable 7-43 of Homo sapiens (Human).